Here is a 292-residue protein sequence, read N- to C-terminus: MNGIINLKKEAGMTSHDAVFKLRKILGTKKIGHGGTLDPDVVGVLPIAVGKATRMVEFMQDEGKIYEGEIILGYSTTTEDASGEVVAETPVLSSLDEKLVDEAIASLTGPITQIPPMYSAVKVNGRKLYEYARAGQEVERPERQVIIYQFERTSPISYDGQLARFTFRVKCSKGTYIRTLSVDLGEKLGYAAHMSHLTRTSAAGLQLEDALALEEIAEKVEAGQLDFLHPLEIGTGDLVKVFLTPEEATEVRFGRFIELDQTDKELAAFEDDKLLAILEKRGNLYKPRKVFS.

Residue Asp38 is the Nucleophile of the active site.

It belongs to the pseudouridine synthase TruB family. Type 1 subfamily.

It carries out the reaction uridine(55) in tRNA = pseudouridine(55) in tRNA. Its function is as follows. Responsible for synthesis of pseudouridine from uracil-55 in the psi GC loop of transfer RNAs. This chain is tRNA pseudouridine synthase B, found in Streptococcus pneumoniae serotype 2 (strain D39 / NCTC 7466).